The chain runs to 141 residues: Large ribosomal subunit protein uL22c (141 aa).

Belongs to the universal ribosomal protein uL22 family. As to quaternary structure, part of the 50S ribosomal subunit.

Its subcellular location is the plastid. The protein localises to the chloroplast. Its function is as follows. This protein binds specifically to 23S rRNA. Functionally, the globular domain of the protein is located near the polypeptide exit tunnel on the outside of the subunit, while an extended beta-hairpin is found that lines the wall of the exit tunnel in the center of the 70S ribosome. This chain is Large ribosomal subunit protein uL22c (rpl22), found in Chloranthus spicatus (Chulantree).